Here is a 294-residue protein sequence, read N- to C-terminus: Small ribosomal subunit biogenesis GTPase RsgA (294 aa).

The CP-type G domain maps to 63–223; that stretch reads KNELLRPPIA…VADTPGFSSL (161 aa). GTP is bound by residues 112–115 and 166–174; these read SKID and GQSGVGKSS. Residues Cys247, Cys252, His254, and Cys260 each coordinate Zn(2+).

It belongs to the TRAFAC class YlqF/YawG GTPase family. RsgA subfamily. Monomer. Associates with 30S ribosomal subunit, binds 16S rRNA. It depends on Zn(2+) as a cofactor.

Its subcellular location is the cytoplasm. Functionally, one of several proteins that assist in the late maturation steps of the functional core of the 30S ribosomal subunit. Helps release RbfA from mature subunits. May play a role in the assembly of ribosomal proteins into the subunit. Circularly permuted GTPase that catalyzes slow GTP hydrolysis, GTPase activity is stimulated by the 30S ribosomal subunit. The sequence is that of Small ribosomal subunit biogenesis GTPase RsgA from Halalkalibacterium halodurans (strain ATCC BAA-125 / DSM 18197 / FERM 7344 / JCM 9153 / C-125) (Bacillus halodurans).